Reading from the N-terminus, the 461-residue chain is Glycolipid 2-alpha-mannosyltransferase 2 (461 aa).

At 1 to 12 (MKPSIFYSSRQP) the chain is on the cytoplasmic side. Residues 13 to 35 (YLKYLAIILTTITIYVLTHSSYS) traverse the membrane as a helical; Signal-anchor for type II membrane protein segment. The span at 35–52 (SADPNINDVTTKPISETV) shows a compositional bias: polar residues. The tract at residues 35 to 138 (SADPNINDVT…SSSKDPVKPE (104 aa)) is disordered. The Lumenal portion of the chain corresponds to 36 to 461 (ADPNINDVTT…QKPKEWEKYQ (426 aa)). Composition is skewed to low complexity over residues 61 to 70 (SSPEQQQQQP) and 106 to 116 (PKSSSSSPQQQ). Basic and acidic residues predominate over residues 117-126 (EKQDTKKESE). Glutamate 349 serves as the catalytic Nucleophile.

Belongs to the glycosyltransferase 15 family.

The protein localises to the golgi apparatus membrane. In terms of biological role, involved in O-glycosylation of cell wall and secreted proteins. Transfers an alpha-D-mannosyl residue from GDP-mannose into lipid-linked oligosaccharide, forming an alpha-(1-&gt;2)-D-mannosyl-D-mannose linkage. Mainly responsible for the addition of the third mannose residue in an O-linked mannose pentamer. Can also substitute for MNT1 by adding the second mannose residue. Important for adherence to host surfaces and for virulence. The chain is Glycolipid 2-alpha-mannosyltransferase 2 (MNT2) from Candida albicans (strain SC5314 / ATCC MYA-2876) (Yeast).